The following is a 276-amino-acid chain: Diaminopimelate epimerase (276 aa).

Positions 13, 46, and 66 each coordinate substrate. Cysteine 75 acts as the Proton donor in catalysis. Substrate is bound by residues 76–77, asparagine 159, asparagine 192, and 210–211; these read GN and ER. The Proton acceptor role is filled by cysteine 219. Substrate is bound at residue 220-221; the sequence is GS.

Belongs to the diaminopimelate epimerase family. Homodimer.

The protein resides in the cytoplasm. The enzyme catalyses (2S,6S)-2,6-diaminopimelate = meso-2,6-diaminopimelate. The protein operates within amino-acid biosynthesis; L-lysine biosynthesis via DAP pathway; DL-2,6-diaminopimelate from LL-2,6-diaminopimelate: step 1/1. Its function is as follows. Catalyzes the stereoinversion of LL-2,6-diaminopimelate (L,L-DAP) to meso-diaminopimelate (meso-DAP), a precursor of L-lysine and an essential component of the bacterial peptidoglycan. The chain is Diaminopimelate epimerase from Pseudoalteromonas atlantica (strain T6c / ATCC BAA-1087).